The following is a 690-amino-acid chain: Methionine--tRNA ligase 1 (690 aa).

A 'HIGH' region motif is present at residues 11 to 21 (PYANGHIHIGH). Positions 142, 145, 155, and 158 each coordinate Zn(2+). Positions 328 to 332 (KMSKS) match the 'KMSKS' region motif. Position 331 (Lys331) interacts with ATP. A tRNA-binding domain is found at 590 to 690 (DFSKVDLRVA…SGAKPGMRVH (101 aa)).

The protein belongs to the class-I aminoacyl-tRNA synthetase family. MetG type 1 subfamily. Homodimer. It depends on Zn(2+) as a cofactor.

Its subcellular location is the cytoplasm. It carries out the reaction tRNA(Met) + L-methionine + ATP = L-methionyl-tRNA(Met) + AMP + diphosphate. Is required not only for elongation of protein synthesis but also for the initiation of all mRNA translation through initiator tRNA(fMet) aminoacylation. The sequence is that of Methionine--tRNA ligase 1 from Sorangium cellulosum (strain So ce56) (Polyangium cellulosum (strain So ce56)).